The sequence spans 438 residues: MADYQGKNVVIIGLGLTGLSCVDFFLARGVTPRVMDTRMTPPGLDKLPEAVERHTGGLNDEWLMAADLIVASPGIALAHPSLSAAADAGIEIVGDIELFCREAQAPIVAITGSNGKSTVTTLVGEMAKAAGVNVGVGGNIGLPALMLLDDECELYVLELSSFQLETTSSLQAVAATILNVTEDHMDRYPFGLQQYRAAKLRIYENAKVCVVNADDALTMPIRGADERCVSFGVNMGDYHLNHQQGETWLRVKGEKVLNVKEMKLSGQHNYTNALAALALADAAGLPRASSLKALTTFTGLPHRFEVVLEHNGVRWVNDSKATNVGSTEAALNGLHVDGTLHLLLGGDGKSADFSPLARYLNGDNVRLYCFGRDGAQLAALRPEVAEQTETMEQAMRLLAPRVQPGDMVLLSPACASLDQFKNFEQRGNEFARLAKELG.

112–118 (GSNGKST) is a binding site for ATP.

Belongs to the MurCDEF family.

Its subcellular location is the cytoplasm. It catalyses the reaction UDP-N-acetyl-alpha-D-muramoyl-L-alanine + D-glutamate + ATP = UDP-N-acetyl-alpha-D-muramoyl-L-alanyl-D-glutamate + ADP + phosphate + H(+). Its pathway is cell wall biogenesis; peptidoglycan biosynthesis. Cell wall formation. Catalyzes the addition of glutamate to the nucleotide precursor UDP-N-acetylmuramoyl-L-alanine (UMA). The chain is UDP-N-acetylmuramoylalanine--D-glutamate ligase from Escherichia coli O6:K15:H31 (strain 536 / UPEC).